Here is a 942-residue protein sequence, read N- to C-terminus: PH and SEC7 domain-containing protein C11E3.11c (942 aa).

A compositionally biased stretch (polar residues) spans 1–18; the sequence is MSRNASNAYLKNGNSTPS. Disordered regions lie at residues 1–128 and 259–308; these read MSRN…TRLN and SRNL…ETTR. Positions 24 to 40 are enriched in low complexity; it reads PSSLSQRSKTSTRSSKP. 4 stretches are compositionally biased toward polar residues: residues 50–60, 90–125, 271–284, and 292–305; these read WFKNESSSRHP, ASMSTNDLPSHPRSQSVMGFSSSTSQLTGTSNSSRT, YGNSRTPLRDSSNY, and NRQSSLSIPKSTSE. Residues 295-497 form the SEC7 domain; sequence SSLSIPKSTS…LSSYKSFASN (203 aa). In terms of domain architecture, PH spans 681–804; the sequence is PYIKQGILKF…WIDALNYWAA (124 aa).

The protein is PH and SEC7 domain-containing protein C11E3.11c of Schizosaccharomyces pombe (strain 972 / ATCC 24843) (Fission yeast).